The primary structure comprises 471 residues: U1 small nuclear ribonucleoprotein 70 kDa (471 aa).

The tract at residues 48 to 78 (FEDPRDAPPPTRAETREERMERKRREKIERR) is disordered. Basic and acidic residues predominate over residues 60–78 (AETREERMERKRREKIERR). The interval 92–205 (HNDQNAQGDA…GGGLGGTRRG (114 aa)) is required for interaction with U1 RNA. In terms of domain architecture, RRM spans 103 to 184 (KTLFVARVNY…RRVLVDVERG (82 aa)). The tract at residues 190–471 (WRPRRLGGGL…NGYMMEPPME (282 aa)) is disordered. Residues 195–204 (LGGGLGGTRR) are compositionally biased toward gly residues. Basic and acidic residues predominate over residues 210-246 (NIRHSGRDDTSRYDERDRERERDRRERSREREKEPRE). Basic residues predominate over residues 247-261 (RRRSRSRERRRKSRS). A compositionally biased stretch (basic and acidic residues) spans 262–288 (REKEERKRTREKSKDKDKEKDKDNKDR). Residues 289-298 (DRKRRSRSRE) are compositionally biased toward basic residues. Over residues 299-316 (RKRERDRDREKKEERVEA) the composition is skewed to basic and acidic residues. Positions 317 to 326 (EVPEADDAPQ) are enriched in acidic residues. The segment covering 339–428 (IELKQEPEEK…RSEKREERVP (90 aa)) has biased composition (basic and acidic residues).

As to quaternary structure, component of the U1 snRNP. The U1 snRNP is composed of the U1 snRNA and the 7 core Sm proteins snrpb, snrpd1, snrpd2, snrpd3, snrpe, snrpf and snrpg that assemble in a heptameric protein ring on the Sm site of the small nuclear RNA to form the core snRNP, and at least three U1 snRNP-specific proteins snrnp70/U1-70K, snrpa/U1-A and snrpc/U1-C.

The protein resides in the nucleus speckle. It is found in the nucleus. It localises to the nucleoplasm. In terms of biological role, component of the spliceosomal U1 snRNP, which is essential for recognition of the pre-mRNA 5' splice-site and the subsequent assembly of the spliceosome. snrnp70 binds to the loop I region of U1-snRNA. The sequence is that of U1 small nuclear ribonucleoprotein 70 kDa (snrnp70) from Xenopus laevis (African clawed frog).